The sequence spans 488 residues: MACSVDTLAPFLGPNTTNAVAAASYICNQFSGVSDRFVDTGYAIDSTYLLFSAYLVFSMQLGFAMLLAGSVRNTMNIMLTNVLDAAAGGLFYYLFGFAFALGGPSNGFIGRHFFGLKEIPSNSFDYMNFLYQWAFAIAAAGITSGSIAERTQFVAYLIYSSFLTGFVYPVVSHWFWTPDGWASPTNSNLLFGSGVIDFAGSGVVHMVGGIAGFYGALIEGPRIGRYDHTGRSVALRGHSASLVVLGTFLLWFGWYGFNPGSFNKILVTYGASGGYYGQWSAVGRTAVTTTLAGCTAALTTLFGKRILSGHWNVTDVCNGLLGGFAAITAGCSVVEPWAAIICGFVAALVLIGFNMLAEKFKYDDPLEAAQLHGGCGAWGIIFTGLFAKGEFVDQVYPGKPGRPHGLFMGGGGKLLGAHIIQILVIIGWVSATMGPLFYILHKFKLLRISSEDEMAGMDLTRHGGFAYYHEEDPKLGMQMRRIEPTTST.

11 helical membrane-spanning segments follow: residues 47–69 (TYLL…LLAG), 90–109 (LFYY…NGFI), 129–148 (FLYQ…GSIA), 153–175 (FVAY…SHWF), 195–217 (VIDF…YGAL), 238–257 (HSAS…WYGF), 281–303 (AVGR…TLFG), 316–333 (VCNG…GCSV), 337–356 (WAAI…FNML), 368–387 (AAQL…GLFA), and 418–440 (HIIQ…FYIL).

The protein belongs to the ammonia transporter channel (TC 1.A.11.2) family. In terms of tissue distribution, root hairs and leaves.

Its subcellular location is the membrane. Functionally, ammonium transporter that may be involved in ammonium uptake from the soil. This is Ammonium transporter 1 member 1 (AMT1-1) from Solanum lycopersicum (Tomato).